The sequence spans 428 residues: UDP-N-acetylglucosamine 1-carboxyvinyltransferase (428 aa).

Lys-25–Asn-26 lines the phosphoenolpyruvate pocket. Arg-102 is a binding site for UDP-N-acetyl-alpha-D-glucosamine. Cys-126 serves as the catalytic Proton donor. 2-(S-cysteinyl)pyruvic acid O-phosphothioketal is present on Cys-126. UDP-N-acetyl-alpha-D-glucosamine is bound by residues Asp-316 and Val-338.

It belongs to the EPSP synthase family. MurA subfamily.

The protein localises to the cytoplasm. The catalysed reaction is phosphoenolpyruvate + UDP-N-acetyl-alpha-D-glucosamine = UDP-N-acetyl-3-O-(1-carboxyvinyl)-alpha-D-glucosamine + phosphate. It participates in cell wall biogenesis; peptidoglycan biosynthesis. Cell wall formation. Adds enolpyruvyl to UDP-N-acetylglucosamine. This chain is UDP-N-acetylglucosamine 1-carboxyvinyltransferase, found in Anaplasma marginale (strain St. Maries).